Reading from the N-terminus, the 351-residue chain is MSIVQLDHVSVTFKRKKAADVQAVQDVTLHIEKGDIYGIVGFSGAGKSTLVRTINLLQKPTAGDVVVGGVDFVKDGKQVISGKDLQARRRKIGMIFQQFNLLNETTVIENIAFALKHSDLSDDELEEKCHKLLKLVDLEDKANAYPAQLSGGQQQRVAIARALANDPEILLSDEATSALDPQTTIQILDLLKKLNRELGLTIVLITHEMAAVKKIANKVAVMENGRVVENGNLRDVFLAPKAELTQKFVGGSLAVVDTLKSLNISLAENEALYQLVYSLNNVAKSIIIELYREVGVEASMLYGNVEVLADEPVGTLLVTVKGDADKQKVTLKFLSDEGVTVTELDERGNRL.

Positions 4–249 constitute an ABC transporter domain; it reads VQLDHVSVTF…PKAELTQKFV (246 aa). 41-48 contacts ATP; it reads GFSGAGKS.

This sequence belongs to the ABC transporter superfamily. Methionine importer (TC 3.A.1.24) family. As to quaternary structure, the complex is composed of two ATP-binding proteins (MetN), two transmembrane proteins (MetI) and a solute-binding protein (MetQ).

It localises to the cell membrane. It catalyses the reaction L-methionine(out) + ATP + H2O = L-methionine(in) + ADP + phosphate + H(+). It carries out the reaction D-methionine(out) + ATP + H2O = D-methionine(in) + ADP + phosphate + H(+). Its function is as follows. Part of the ABC transporter complex MetNIQ involved in methionine import. Responsible for energy coupling to the transport system. In Lactobacillus delbrueckii subsp. bulgaricus (strain ATCC BAA-365 / Lb-18), this protein is Methionine import ATP-binding protein MetN.